A 242-amino-acid chain; its full sequence is 3-deoxy-manno-octulosonate cytidylyltransferase (242 aa).

This sequence belongs to the KdsB family.

Its subcellular location is the cytoplasm. The catalysed reaction is 3-deoxy-alpha-D-manno-oct-2-ulosonate + CTP = CMP-3-deoxy-beta-D-manno-octulosonate + diphosphate. It participates in nucleotide-sugar biosynthesis; CMP-3-deoxy-D-manno-octulosonate biosynthesis; CMP-3-deoxy-D-manno-octulosonate from 3-deoxy-D-manno-octulosonate and CTP: step 1/1. Its pathway is bacterial outer membrane biogenesis; lipopolysaccharide biosynthesis. Activates KDO (a required 8-carbon sugar) for incorporation into bacterial lipopolysaccharide in Gram-negative bacteria. In Anaeromyxobacter sp. (strain K), this protein is 3-deoxy-manno-octulosonate cytidylyltransferase.